The sequence spans 696 residues: Elongation factor G (696 aa).

Positions 10–290 (THFRNIGIAA…AVVDYLPSPL (281 aa)) constitute a tr-type G domain. Residues 19–26 (AHIDAGKT), 89–93 (DTPGH), and 143–146 (NKMD) each bind GTP.

This sequence belongs to the TRAFAC class translation factor GTPase superfamily. Classic translation factor GTPase family. EF-G/EF-2 subfamily.

The protein resides in the cytoplasm. Catalyzes the GTP-dependent ribosomal translocation step during translation elongation. During this step, the ribosome changes from the pre-translocational (PRE) to the post-translocational (POST) state as the newly formed A-site-bound peptidyl-tRNA and P-site-bound deacylated tRNA move to the P and E sites, respectively. Catalyzes the coordinated movement of the two tRNA molecules, the mRNA and conformational changes in the ribosome. The protein is Elongation factor G of Deinococcus geothermalis (strain DSM 11300 / CIP 105573 / AG-3a).